The sequence spans 132 residues: L-ectoine synthase (132 aa).

This sequence belongs to the ectoine synthase family.

It catalyses the reaction (2S)-4-acetamido-2-aminobutanoate = L-ectoine + H2O. The protein operates within amine and polyamine biosynthesis; ectoine biosynthesis; L-ectoine from L-aspartate 4-semialdehyde: step 3/3. In terms of biological role, catalyzes the circularization of gamma-N-acetyl-alpha,gamma-diaminobutyric acid (ADABA) to ectoine (1,4,5,6-tetrahydro-2-methyl-4-pyrimidine carboxylic acid), which is an excellent osmoprotectant. The protein is L-ectoine synthase of Rhodococcus jostii (strain RHA1).